Here is a 127-residue protein sequence, read N- to C-terminus: Fluoride-specific ion channel FluC (127 aa).

4 consecutive transmembrane segments (helical) span residues 7–27, 38–58, 70–90, and 102–122; these read VYVA…VAWV, GTLA…VYVV, LIMV…LEAW, and LAYI…GIAL. Na(+)-binding residues include Gly-77 and Thr-80.

Belongs to the fluoride channel Fluc/FEX (TC 1.A.43) family.

Its subcellular location is the cell inner membrane. It catalyses the reaction fluoride(in) = fluoride(out). With respect to regulation, na(+) is not transported, but it plays an essential structural role and its presence is essential for fluoride channel function. Functionally, fluoride-specific ion channel. Important for reducing fluoride concentration in the cell, thus reducing its toxicity. The chain is Fluoride-specific ion channel FluC from Hahella chejuensis (strain KCTC 2396).